A 513-amino-acid chain; its full sequence is OBERON-like protein (513 aa).

Residues 166–235 (NGFCNLCMCV…VFRCQACSXT (70 aa)) form a PHD-type zinc finger. Residues 372–469 (RELADKAREA…LYEKIKLQES (98 aa)) adopt a coiled-coil conformation. The tract at residues 493 to 513 (YNGPPKADSQSNDCHPFRTNP) is disordered. Over residues 500 to 513 (DSQSNDCHPFRTNP) the composition is skewed to polar residues.

In terms of assembly, self-interacts and probably forms heteromers. Binds to VPg of pea seed borne mosaic virus (PSbMV), turnip mosaic virus (TuMV) and lettuce mosaic virus (LMV), but not with VPg of tobacco etch virus (TEV), cowpea mosaic virus (CPMV), tomato black ring virus (TBRV) and grapevine fan leaf virus (GFLV).

The protein localises to the nucleus. In terms of biological role, required for the maintenance and/or establishment of both the shoot and root meristems, probably by controlling the expression of the meristem genes and of genes required for auxin responses. Involved in the development of the basal pole and in auxin-mediated root and vascular development in the embryo. Confers sensitivity to turnip mosaic virus (TuMV) probably by promoting viral movement and multiplication via interaction with TuMV VPg. In Pisum sativum (Garden pea), this protein is OBERON-like protein (PVIP).